A 354-amino-acid polypeptide reads, in one-letter code: Holliday junction branch migration complex subunit RuvB (354 aa).

The tract at residues 5–197 (TDDFSAADLP…FGIVARLEFY (193 aa)) is large ATPase domain (RuvB-L). Residues leucine 36, arginine 37, glycine 78, lysine 81, threonine 82, threonine 83, 144-146 (EDY), arginine 187, tyrosine 197, and arginine 234 each bind ATP. Residue threonine 82 participates in Mg(2+) binding. Residues 198-268 (TAEELGRIVR…IANKALAMLD (71 aa)) are small ATPAse domain (RuvB-S). The segment at 271 to 354 (PQGFDVMDRK…PPVSGNDMFT (84 aa)) is head domain (RuvB-H). 3 residues coordinate DNA: arginine 307, arginine 326, and arginine 331.

This sequence belongs to the RuvB family. In terms of assembly, homohexamer. Forms an RuvA(8)-RuvB(12)-Holliday junction (HJ) complex. HJ DNA is sandwiched between 2 RuvA tetramers; dsDNA enters through RuvA and exits via RuvB. An RuvB hexamer assembles on each DNA strand where it exits the tetramer. Each RuvB hexamer is contacted by two RuvA subunits (via domain III) on 2 adjacent RuvB subunits; this complex drives branch migration. In the full resolvosome a probable DNA-RuvA(4)-RuvB(12)-RuvC(2) complex forms which resolves the HJ.

Its subcellular location is the cytoplasm. The catalysed reaction is ATP + H2O = ADP + phosphate + H(+). Its function is as follows. The RuvA-RuvB-RuvC complex processes Holliday junction (HJ) DNA during genetic recombination and DNA repair, while the RuvA-RuvB complex plays an important role in the rescue of blocked DNA replication forks via replication fork reversal (RFR). RuvA specifically binds to HJ cruciform DNA, conferring on it an open structure. The RuvB hexamer acts as an ATP-dependent pump, pulling dsDNA into and through the RuvAB complex. RuvB forms 2 homohexamers on either side of HJ DNA bound by 1 or 2 RuvA tetramers; 4 subunits per hexamer contact DNA at a time. Coordinated motions by a converter formed by DNA-disengaged RuvB subunits stimulates ATP hydrolysis and nucleotide exchange. Immobilization of the converter enables RuvB to convert the ATP-contained energy into a lever motion, pulling 2 nucleotides of DNA out of the RuvA tetramer per ATP hydrolyzed, thus driving DNA branch migration. The RuvB motors rotate together with the DNA substrate, which together with the progressing nucleotide cycle form the mechanistic basis for DNA recombination by continuous HJ branch migration. Branch migration allows RuvC to scan DNA until it finds its consensus sequence, where it cleaves and resolves cruciform DNA. In Polaromonas sp. (strain JS666 / ATCC BAA-500), this protein is Holliday junction branch migration complex subunit RuvB.